A 24-amino-acid polypeptide reads, in one-letter code: Acetylcholine receptor subunit alpha (24 aa).

It belongs to the ligand-gated ion channel (TC 1.A.9) family. Acetylcholine receptor (TC 1.A.9.1) subfamily. Alpha-1/CHRNA1 sub-subfamily. One of the alpha chains that assemble within the acetylcholine receptor, a pentamer of two alpha chains, a beta, a delta, and a gamma or epsilon chains.

The protein resides in the postsynaptic cell membrane. Its subcellular location is the cell membrane. The catalysed reaction is K(+)(in) = K(+)(out). It carries out the reaction Na(+)(in) = Na(+)(out). Its function is as follows. Upon acetylcholine binding, the AChR responds by an extensive change in conformation that affects all subunits and leads to opening of an ion-conducting channel across the plasma membrane. The protein is Acetylcholine receptor subunit alpha (chrna1) of Electrophorus electricus (Electric eel).